Consider the following 537-residue polypeptide: Multidrug resistance protein Stp (537 aa).

The next 14 membrane-spanning stretches (helical) occupy residues 6-26 (LLTLIATGLGLFMIFLDALIV), 46-66 (WVVASYSLGMAVFIMSAATLA), 77-97 (IGVSLFTLGSIACGLAPSIAV), 104-124 (AQGLGAAAVSVTSLALVSAAF), 136-156 (IWTAIASIGTTTGPTLGGLLV), 163-183 (SIFYVNLPMGALVLFLTLCYV), 200-220 (LLFIVAVGALVYAVIEGPQIG), 223-243 (SVQTIVMLWTAAVGCALFVWL), 262-282 (YALAIATICTVFFAVYGMLLL), 300-320 (LMILPFSAAVAIVSPLVGHLV), 327-347 (VPILAGLCMLMLGLLMLIFSE), 352-372 (ALVLVGLGLCGSGVALCLTPI), 397-417 (AIGSTIGFAVLGSVLAAWLSA), and 478-498 (VALLVATATLAVVFLAGWRWF).

This sequence belongs to the major facilitator superfamily. EmrB family.

The protein localises to the cell membrane. This Mycobacterium tuberculosis (strain CDC 1551 / Oshkosh) protein is Multidrug resistance protein Stp (stp).